Here is a 499-residue protein sequence, read N- to C-terminus: Lanosterol 14-alpha demethylase (499 aa).

A helical membrane pass occupies residues serine 13–glycine 35. Cysteine 441 lines the heme pocket.

The protein belongs to the cytochrome P450 family. The cofactor is heme. As to expression, strongly expressed in intestine. Moderately expressed in liver, with higher levels in females compared to males. Also detected at low levels in brain, eye, kidney and testis.

The protein localises to the endoplasmic reticulum membrane. It localises to the membrane. The enzyme catalyses a 14alpha-methyl steroid + 3 reduced [NADPH--hemoprotein reductase] + 3 O2 = a Delta(14) steroid + formate + 3 oxidized [NADPH--hemoprotein reductase] + 4 H2O + 4 H(+). It catalyses the reaction lanosterol + 3 reduced [NADPH--hemoprotein reductase] + 3 O2 = 4,4-dimethyl-5alpha-cholesta-8,14,24-trien-3beta-ol + formate + 3 oxidized [NADPH--hemoprotein reductase] + 4 H2O + 4 H(+). It carries out the reaction 24,25-dihydrolanosterol + 3 reduced [NADPH--hemoprotein reductase] + 3 O2 = 4,4-dimethyl-8,14-cholestadien-3beta-ol + formate + 3 oxidized [NADPH--hemoprotein reductase] + 4 H2O + 4 H(+). The catalysed reaction is a 14alpha-methyl steroid + reduced [NADPH--hemoprotein reductase] + O2 = a 14alpha-hydroxymethyl steroid + oxidized [NADPH--hemoprotein reductase] + H2O + H(+). The enzyme catalyses a 14alpha-hydroxymethyl steroid + reduced [NADPH--hemoprotein reductase] + O2 = a 14alpha-formyl steroid + oxidized [NADPH--hemoprotein reductase] + 2 H2O + H(+). It catalyses the reaction a 14alpha-formyl steroid + reduced [NADPH--hemoprotein reductase] + O2 = a Delta(14) steroid + formate + oxidized [NADPH--hemoprotein reductase] + H2O + 2 H(+). It carries out the reaction lanosterol + reduced [NADPH--hemoprotein reductase] + O2 = 32-hydroxylanosterol + oxidized [NADPH--hemoprotein reductase] + H2O + H(+). The catalysed reaction is 32-hydroxylanosterol + reduced [NADPH--hemoprotein reductase] + O2 = 32-oxolanosterol + oxidized [NADPH--hemoprotein reductase] + 2 H2O + H(+). The enzyme catalyses 32-oxolanosterol + reduced [NADPH--hemoprotein reductase] + O2 = 4,4-dimethyl-5alpha-cholesta-8,14,24-trien-3beta-ol + formate + oxidized [NADPH--hemoprotein reductase] + H2O + 2 H(+). It catalyses the reaction 24,25-dihydrolanosterol + reduced [NADPH--hemoprotein reductase] + O2 = 32-hydroxy-24,25-dihydrolanosterol + oxidized [NADPH--hemoprotein reductase] + H2O + H(+). It carries out the reaction 32-hydroxy-24,25-dihydrolanosterol + reduced [NADPH--hemoprotein reductase] + O2 = 32-oxo-24,25-dihydrolanosterol + oxidized [NADPH--hemoprotein reductase] + 2 H2O + H(+). The catalysed reaction is 32-oxo-24,25-dihydrolanosterol + reduced [NADPH--hemoprotein reductase] + O2 = 4,4-dimethyl-8,14-cholestadien-3beta-ol + formate + oxidized [NADPH--hemoprotein reductase] + H2O + 2 H(+). It participates in steroid biosynthesis; zymosterol biosynthesis; zymosterol from lanosterol: step 1/6. With respect to regulation, inhibited by ketoconazole. May also be inhibited to a lesser extent by propiconazole. Its function is as follows. Sterol 14alpha-demethylase that plays a critical role in the cholesterol biosynthesis pathway, being cholesterol the major sterol component in deuterostome membranes as well as a precursor for steroid hormone synthesis. Cytochrome P450 monooxygenase that catalyzes the three-step oxidative removal of the 14alpha-methyl group (C-32) of sterols such as lanosterol (lanosta-8,24-dien-3beta-ol) and 24,25-dihydrolanosterol (DHL) in the form of formate, and converts the sterols to 4,4-dimethyl-5alpha-cholesta-8,14,24-trien-3beta-ol and 4,4-dimethyl-8,14-cholestadien-3beta-ol, respectively, which are intermediates of cholesterol biosynthesis. Can also demethylate substrates not intrinsic to deuterostomes, such as eburicol (24-methylene-24,25-dihydrolanosterol), but at a lower rate than DHL. The protein is Lanosterol 14-alpha demethylase of Danio rerio (Zebrafish).